A 483-amino-acid chain; its full sequence is ATP synthase subunit beta (483 aa).

169 to 176 lines the ATP pocket; it reads GGAGVGKT.

The protein belongs to the ATPase alpha/beta chains family. In terms of assembly, F-type ATPases have 2 components, CF(1) - the catalytic core - and CF(0) - the membrane proton channel. CF(1) has five subunits: alpha(3), beta(3), gamma(1), delta(1), epsilon(1). CF(0) has three main subunits: a(1), b(2) and c(9-12). The alpha and beta chains form an alternating ring which encloses part of the gamma chain. CF(1) is attached to CF(0) by a central stalk formed by the gamma and epsilon chains, while a peripheral stalk is formed by the delta and b chains.

It is found in the cell membrane. The catalysed reaction is ATP + H2O + 4 H(+)(in) = ADP + phosphate + 5 H(+)(out). Produces ATP from ADP in the presence of a proton gradient across the membrane. The catalytic sites are hosted primarily by the beta subunits. The chain is ATP synthase subunit beta from Rhodococcus erythropolis (strain PR4 / NBRC 100887).